Here is a 188-residue protein sequence, read N- to C-terminus: Ribose 1,5-bisphosphate phosphokinase PhnN (188 aa).

An ATP-binding site is contributed by 9 to 16 (GPSGAGKD).

Belongs to the ribose 1,5-bisphosphokinase family.

The catalysed reaction is alpha-D-ribose 1,5-bisphosphate + ATP = 5-phospho-alpha-D-ribose 1-diphosphate + ADP. Its pathway is metabolic intermediate biosynthesis; 5-phospho-alpha-D-ribose 1-diphosphate biosynthesis; 5-phospho-alpha-D-ribose 1-diphosphate from D-ribose 5-phosphate (route II): step 3/3. In terms of biological role, catalyzes the phosphorylation of ribose 1,5-bisphosphate to 5-phospho-D-ribosyl alpha-1-diphosphate (PRPP). The sequence is that of Ribose 1,5-bisphosphate phosphokinase PhnN from Pectobacterium atrosepticum (strain SCRI 1043 / ATCC BAA-672) (Erwinia carotovora subsp. atroseptica).